Reading from the N-terminus, the 412-residue chain is MDELLIQDPEVGRAIVQEVERQTGKLELIASENFVSPAVRAAQGSVLTHKYAEGYPGKRYYGGCEFVDVAENLAIDRACEIFGAQYANVQPHSGSQANMAVYFSALTPGDTILAMDLSHGGHLTHGSPVNFSGRFYNVVFYGVSRETGCIDYDSVAELAREHRPAMIVAGASAYSRIIDFARFRAIADEVGSLLMVDMAHIAGLVAAGLHPSPVGTAHFTTTTTHKTLRGPRGGMILSDEEAAKKLNSQIFPGIQGGPLMHVIAAKAVAFGEALRPEFGAYQKQVVANAAKLAATLTDAGFELVSGGTDNHLMLVDLTNKDITGKDAQHALDLAGITANKNTVPFETRSPFVTSGIRLGTPALTTRGMKEAEMVKVAGWIIDALGNIGNETRLAEISRDVEKFARQFPLFHW.

Residues leucine 117 and 121 to 123 (GHL) each bind (6S)-5,6,7,8-tetrahydrofolate. Lysine 226 is subject to N6-(pyridoxal phosphate)lysine. 349-351 (SPF) contacts (6S)-5,6,7,8-tetrahydrofolate.

It belongs to the SHMT family. In terms of assembly, homodimer. It depends on pyridoxal 5'-phosphate as a cofactor.

It is found in the cytoplasm. The catalysed reaction is (6R)-5,10-methylene-5,6,7,8-tetrahydrofolate + glycine + H2O = (6S)-5,6,7,8-tetrahydrofolate + L-serine. It participates in one-carbon metabolism; tetrahydrofolate interconversion. The protein operates within amino-acid biosynthesis; glycine biosynthesis; glycine from L-serine: step 1/1. Its function is as follows. Catalyzes the reversible interconversion of serine and glycine with tetrahydrofolate (THF) serving as the one-carbon carrier. This reaction serves as the major source of one-carbon groups required for the biosynthesis of purines, thymidylate, methionine, and other important biomolecules. Also exhibits THF-independent aldolase activity toward beta-hydroxyamino acids, producing glycine and aldehydes, via a retro-aldol mechanism. In Oleidesulfovibrio alaskensis (strain ATCC BAA-1058 / DSM 17464 / G20) (Desulfovibrio alaskensis), this protein is Serine hydroxymethyltransferase.